The sequence spans 489 residues: Rhamnulokinase (489 aa).

An ATP-binding site is contributed by 13 to 17 (ASSGR). Cysteine 68 and cysteine 222 are oxidised to a cystine. Residues glycine 83 and 236 to 238 (HDT) contribute to the substrate site. Aspartate 237 acts as the Proton acceptor in catalysis. Threonine 259 is an ATP binding site. Asparagine 296 lines the substrate pocket. Glutamine 304 is a binding site for ATP. A disulfide bond links cysteine 353 and cysteine 370. Glycine 402 provides a ligand contact to ATP. A disulfide bridge links cysteine 413 with cysteine 417.

It belongs to the rhamnulokinase family. Mg(2+) serves as cofactor.

It catalyses the reaction L-rhamnulose + ATP = L-rhamnulose 1-phosphate + ADP + H(+). It functions in the pathway carbohydrate degradation; L-rhamnose degradation; glycerone phosphate from L-rhamnose: step 2/3. Its function is as follows. Involved in the catabolism of L-rhamnose (6-deoxy-L-mannose). Catalyzes the transfer of the gamma-phosphate group from ATP to the 1-hydroxyl group of L-rhamnulose to yield L-rhamnulose 1-phosphate. The protein is Rhamnulokinase of Shigella flexneri serotype 5b (strain 8401).